A 442-amino-acid chain; its full sequence is MIPPTSAQVTAEQNVLQTFFSHLGNFSYDKAKDHVEKEKEGNKSAGASWSLMLAALAHLAAAQKAYHSMSFLGQKQGGQLFFSRKDSIRTNYTSLYNELKKVVTTGRNAVGGTAPHLEELLSHLSEQLCYFVQAHMEIADFYEKMYTLSSQKFINAEELVKILEAILKKYSSRFHHPTLSPLESGFQLEVDVLAHLLKAQFLIYEWKFLPALVNLHNAHTKLQTWGQIFEKQKETKKHLFGGQSQKVAQPPHLFLWLMKFKNLLLAKFSFYFHEALSRQTSEMKTLTAKTNPDYFGKISSFIRKYDAVNVSLIYDTRGSENFQGHGYHHPDSYREAPKGMDQYPAVVSLPNDRPIMHWPNVIMIMTDKSADLNTLEKVVHFYDDKVQSTYFLTRPEPNFTIVVIFESKKSERDSHFTSFLNELSQSLKGSRAFASLKPGSKV.

Belongs to the KICS2 family. May be part of the KICSTOR complex.

It is found in the lysosome membrane. Functionally, as part of the KICSTOR complex may function in the amino acid-sensing branch of the TORC1 signaling pathway. This chain is KICSTOR subunit 2 (kics2), found in Xenopus laevis (African clawed frog).